The primary structure comprises 329 residues: Prostaglandin reductase 1 (329 aa).

Phosphothreonine is present on Thr18. At Ser20 the chain carries Phosphoserine. NADP(+)-binding positions include 152-155 (GAVG), Lys178, Tyr193, Asn217, 239-245 (CGAISTY), 270-272 (FVV), and Asn321. The residue at position 178 (Lys178) is an N6-(2-hydroxyisobutyryl)lysine; alternate. Lys178 is modified (N6-acetyllysine; alternate).

Belongs to the NADP-dependent oxidoreductase L4BD family. Monomer or homodimer. High expression in the kidney, liver, and intestine but not in leukocytes.

The protein localises to the cytoplasm. The enzyme catalyses 13,14-dihydro-15-oxo-prostaglandin E1 + NADP(+) = 15-oxoprostaglandin E1 + NADPH + H(+). It catalyses the reaction 13,14-dihydro-15-oxo-prostaglandin E2 + NADP(+) = 15-oxoprostaglandin E2 + NADPH + H(+). The catalysed reaction is 13,14-dihydro-15-oxo-prostaglandin F1alpha + NADP(+) = 15-oxoprostaglandin F1alpha + NADPH + H(+). It carries out the reaction 13,14-dihydro-15-oxo-PGF2alpha + NADP(+) = 15-oxoprostaglandin F2alpha + NADPH + H(+). The enzyme catalyses leukotriene B4 + NADP(+) = 12-oxo-leukotriene B4 + NADPH + H(+). It catalyses the reaction 20-hydroxy-leukotriene B4 + NADP(+) = 12-oxo-20-hydroxy-leukotriene B4 + NADPH + H(+). The catalysed reaction is 6-trans-leukotriene B4 + NADP(+) = 12-oxo-(5S)-hydroxy-(6E,8E,10E,14Z)-eicosatetraenoate + NADPH + H(+). It carries out the reaction (5S,12S)-dihydroxy-(6E,10E,12E,14Z)-eicosatetraenoate + NADP(+) = 12-oxo-(5S)-hydroxy-(6E,8E,10E,14Z)-eicosatetraenoate + NADPH + H(+). The enzyme catalyses an n-alkanal + NADP(+) = an alk-2-enal + NADPH + H(+). It catalyses the reaction hexanal + NADP(+) = (E)-hex-2-enal + NADPH + H(+). The catalysed reaction is octanal + NADP(+) = (2E)-octenal + NADPH + H(+). It carries out the reaction decanal + NADP(+) = (2E)-decenal + NADPH + H(+). The enzyme catalyses dodecanal + NADP(+) = (2E)-dodecenal + NADPH + H(+). It catalyses the reaction 4-hydroxynonanal + NADP(+) = (E)-4-hydroxynon-2-enal + NADPH + H(+). The catalysed reaction is pentan-2-one + NADP(+) = (E)-pent-3-en-2-one + NADPH + H(+). It carries out the reaction nonan-2-one + NADP(+) = (3E)-nonen-2-one + NADPH + H(+). Functionally, NAD(P)H-dependent oxidoreductase involved in metabolic inactivation of pro- and anti-inflammatory eicosanoids: prostaglandins (PG), leukotrienes (LT) and lipoxins (LX). Catalyzes with high efficiency the reduction of the 13,14 double bond of 15-oxoPGs, including 15-oxo-PGE1, 15-oxo-PGE2, 15-oxo-PGF1-alpha and 15-oxo-PGF2-alpha. Catalyzes with lower efficiency the oxidation of the hydroxyl group at C12 of LTB4 and its derivatives, converting them into biologically less active 12-oxo-LTB4 metabolites. Reduces 15-oxo-LXA4 to 13,14 dihydro-15-oxo-LXA4, enhancing neutrophil recruitment at the inflammatory site. May play a role in metabolic detoxification of alkenals and ketones. Reduces alpha,beta-unsaturated alkenals and ketones, particularly those with medium-chain length, showing highest affinity toward (2E)-decenal and (3E)-3-nonen-2-one. May inactivate 4-hydroxy-2-nonenal, a cytotoxic lipid constituent of oxidized low-density lipoprotein particles. The sequence is that of Prostaglandin reductase 1 (PTGR1) from Homo sapiens (Human).